We begin with the raw amino-acid sequence, 218 residues long: Probable transaldolase (218 aa).

Residue Lys87 is the Schiff-base intermediate with substrate of the active site.

Belongs to the transaldolase family. Type 3B subfamily.

The protein resides in the cytoplasm. It catalyses the reaction D-sedoheptulose 7-phosphate + D-glyceraldehyde 3-phosphate = D-erythrose 4-phosphate + beta-D-fructose 6-phosphate. Its pathway is carbohydrate degradation; pentose phosphate pathway; D-glyceraldehyde 3-phosphate and beta-D-fructose 6-phosphate from D-ribose 5-phosphate and D-xylulose 5-phosphate (non-oxidative stage): step 2/3. Functionally, transaldolase is important for the balance of metabolites in the pentose-phosphate pathway. This chain is Probable transaldolase, found in Bacteroides fragilis (strain ATCC 25285 / DSM 2151 / CCUG 4856 / JCM 11019 / LMG 10263 / NCTC 9343 / Onslow / VPI 2553 / EN-2).